The primary structure comprises 179 residues: Large ribosomal subunit protein uL5 (179 aa).

This sequence belongs to the universal ribosomal protein uL5 family. In terms of assembly, part of the 50S ribosomal subunit; part of the 5S rRNA/L5/L18/L25 subcomplex. Contacts the 5S rRNA and the P site tRNA. Forms a bridge to the 30S subunit in the 70S ribosome.

Its function is as follows. This is one of the proteins that bind and probably mediate the attachment of the 5S RNA into the large ribosomal subunit, where it forms part of the central protuberance. In the 70S ribosome it contacts protein S13 of the 30S subunit (bridge B1b), connecting the 2 subunits; this bridge is implicated in subunit movement. Contacts the P site tRNA; the 5S rRNA and some of its associated proteins might help stabilize positioning of ribosome-bound tRNAs. In Haemophilus influenzae (strain 86-028NP), this protein is Large ribosomal subunit protein uL5.